A 160-amino-acid chain; its full sequence is Phosphopantetheine adenylyltransferase (160 aa).

Serine 9 is a substrate binding site. ATP is bound by residues 9-10 (SF) and histidine 17. Substrate is bound by residues lysine 41, isoleucine 73, and lysine 87. ATP is bound by residues 88-90 (GLR), glutamate 98, and 122-128 (YSFVSSS).

It belongs to the bacterial CoaD family. As to quaternary structure, homohexamer. Mg(2+) is required as a cofactor.

It localises to the cytoplasm. The catalysed reaction is (R)-4'-phosphopantetheine + ATP + H(+) = 3'-dephospho-CoA + diphosphate. The protein operates within cofactor biosynthesis; coenzyme A biosynthesis; CoA from (R)-pantothenate: step 4/5. Its function is as follows. Reversibly transfers an adenylyl group from ATP to 4'-phosphopantetheine, yielding dephospho-CoA (dPCoA) and pyrophosphate. In Mycolicibacterium vanbaalenii (strain DSM 7251 / JCM 13017 / BCRC 16820 / KCTC 9966 / NRRL B-24157 / PYR-1) (Mycobacterium vanbaalenii), this protein is Phosphopantetheine adenylyltransferase.